We begin with the raw amino-acid sequence, 211 residues long: Transcriptional regulatory protein LiaR (211 aa).

Positions 3-119 (RVLLIDDHEM…EIADAIRAAS (117 aa)) constitute a Response regulatory domain. Aspartate 54 is subject to 4-aspartylphosphate. The 66-residue stretch at 143–208 (NALPHESLTK…QAAVYAHRNH (66 aa)) folds into the HTH luxR-type domain. Positions 167–186 (NKEIGEELFITIKTVKTHIT) form a DNA-binding region, H-T-H motif.

Post-translationally, phosphorylated by LiaS.

It is found in the cytoplasm. Functionally, member of the two-component regulatory system LiaS/LiaR probably involved in response to a subset of cell wall-active antibiotics that interfere with the lipid II cycle in the cytoplasmic membrane (bacitracin, nisin, ramoplanin and vancomycin). Also seems to be involved in response to cationic antimicrobial peptides and secretion stress. LiaR regulates the transcription of the liaIHGFSR operon. The sequence is that of Transcriptional regulatory protein LiaR (liaR) from Bacillus subtilis (strain 168).